The primary structure comprises 323 residues: MDPKGWCEKLNDGHVIPVLGFGTYAPEEVPKSRTVEVTKLAIDAGFRHIDSAYSYNNEKEVGQAIRSKIEDGTVKREDIFYTSKLWLTFLRPELVRPALEKSLTNLQLDYVDLYIIHFPIALKPGEELFPEDEHGKLIFDTVDLCATWEAMEKCKDAGLAKSIGVSNFNRRQLEMILNKPGLKYKPVCNQVECHPYLNQSKLLDFCKSKDIVLVAYGALGTQRLKRWLAPNSPVLLEDPVLCAMAKKYKRTPALIALRYLLQRGVVVLAKSYNEKRIKENMQVFEFQLTSEDMKDLDGLNRNHRFLPLQIAVDHPEYPFADEY.

20-24 (GFGTY) contacts NADP(+). Lys-31 is a binding site for substrate. An NADP(+)-binding site is contributed by Asp-50. Residue Tyr-55 is the Proton donor of the active site. Residue His-117 coordinates substrate. NADP(+) contacts are provided by residues 166–167 (SN), Gln-190, 216–222 (YGALGTQ), and 270–280 (KSYNEKRIKEN).

Belongs to the aldo/keto reductase family. In terms of assembly, monomer. Detected in endometrium surface epithelium (at protein level). Detected in endometrium.

The protein resides in the cytoplasm. NADP-dependent oxidoreductase involved in steroid metabolism. May act on various hydroxysteroids. The sequence is that of Aldo-keto reductase family 1 member C23-like protein (PGFS) from Equus caballus (Horse).